The chain runs to 394 residues: MQLLDTLEQGLKEIDARGLRRRRRTVDSPCSAHMTVDGRNMIGFASNDYLGLAAHPLLVAAITEGARRYGAGSGGSHLLGGHSRAHAQLEDDLAEFAGGFVDNPRALYFSTGYMANLATLTALAGRGTTLFSDSLNHASLIDGARLSRADIQIYPHADAEALGAMLEASDAAVKLIVSDTVFSMDGDIAPLARLLELAEHHGAWLVVDDAHGFGVLGPQGRGAVAEAALRSPHLIVVGTLGKAAGVSGAFVVAHETVIEWLVQRARPYIFTTASVPSAAHAVSASLRIIGGDEGEHRRAHLRSLIALTRDMLKSTPWLPVDSHTAVQPLIIGSNEATLDVAASLDRANLWVPAIRPPTVPEGTSRLRISLSAAHSHNDLEQLEHALMKTAEARA.

R21 serves as a coordination point for substrate. Residue 112-113 coordinates pyridoxal 5'-phosphate; the sequence is GY. H137 is a binding site for substrate. Residues S183, H211, and T239 each coordinate pyridoxal 5'-phosphate. K242 is subject to N6-(pyridoxal phosphate)lysine. T358 contributes to the substrate binding site.

The protein belongs to the class-II pyridoxal-phosphate-dependent aminotransferase family. BioF subfamily. In terms of assembly, homodimer. It depends on pyridoxal 5'-phosphate as a cofactor.

The enzyme catalyses 6-carboxyhexanoyl-[ACP] + L-alanine + H(+) = (8S)-8-amino-7-oxononanoate + holo-[ACP] + CO2. Its pathway is cofactor biosynthesis; biotin biosynthesis. Catalyzes the decarboxylative condensation of pimeloyl-[acyl-carrier protein] and L-alanine to produce 8-amino-7-oxononanoate (AON), [acyl-carrier protein], and carbon dioxide. This Paraburkholderia phymatum (strain DSM 17167 / CIP 108236 / LMG 21445 / STM815) (Burkholderia phymatum) protein is 8-amino-7-oxononanoate synthase.